We begin with the raw amino-acid sequence, 527 residues long: UPF0053 protein YegH (527 aa).

5 helical membrane passes run 14 to 34 (ITLI…IAIL), 51 to 71 (LLLA…LVTL), 81 to 101 (FTFS…LFKA), 145 to 165 (ITAV…VIAI), and 185 to 205 (IVIL…AEGF). CBS domains are found at residues 306 to 366 (MTSR…GEPL) and 371 to 429 (LIRQ…PNEV).

Belongs to the UPF0053 family.

Its subcellular location is the cell membrane. The sequence is that of UPF0053 protein YegH (yegH) from Escherichia coli (strain K12).